Consider the following 291-residue polypeptide: Taste receptor type 2 member 16 (291 aa).

Residue M1 is a topological domain, extracellular. Residues 2–22 traverse the membrane as a helical segment; the sequence is IPIQLTVFFMIIYVLESLTII. Residues 23 to 41 lie on the Cytoplasmic side of the membrane; that stretch reads VQSSLIVAVLGREWLQVRR. The helical transmembrane segment at 42–62 threads the bilayer; sequence LMPVDMILISLGISRFCLQWA. Over 63-84 the chain is Extracellular; the sequence is SMLNNFCSYFNLNYVLCNLTIT. N80 is a glycosylation site (N-linked (GlcNAc...) asparagine). A helical membrane pass occupies residues 85 to 105; that stretch reads WEFFNILTFWLNSLLTVFYCI. Residues 106–125 are Cytoplasmic-facing; the sequence is KVSSFTHHIFLWLRWRILRL. Residues 126-146 form a helical membrane-spanning segment; sequence FPWILLGSLMITCVTIIPSAI. Topologically, residues 147–182 are extracellular; sequence GNYIQIQLLTMEHLPRNSTVTDKLEKFHQYQFQAHT. The N-linked (GlcNAc...) asparagine glycan is linked to N163. Residues 183-203 traverse the membrane as a helical segment; the sequence is VALVIPFILFLASTILLMASL. Residues 204–228 lie on the Cytoplasmic side of the membrane; that stretch reads TKQIQHHSTGHCNPSMKAHFTALRS. A helical transmembrane segment spans residues 229 to 249; that stretch reads LAVLFIVFTSYFLTILITIIG. At 250-257 the chain is on the extracellular side; it reads TLFDKRCW. Residues 258–278 traverse the membrane as a helical segment; sequence LWVWEAFVYAFILMHSTSLML. Residues 279–291 lie on the Cytoplasmic side of the membrane; that stretch reads SSPTLKRILKGKC.

It belongs to the G-protein coupled receptor T2R family. As to quaternary structure, interacts with RTP3 and RTP4.

The protein resides in the cell membrane. In terms of biological role, receptor that may play a role in the perception of bitterness and is gustducin-linked. May play a role in sensing the chemical composition of the gastrointestinal content. The activity of this receptor may stimulate alpha gustducin, mediate PLC-beta-2 activation and lead to the gating of TRPM5. In Pan troglodytes (Chimpanzee), this protein is Taste receptor type 2 member 16 (TAS2R16).